A 336-amino-acid polypeptide reads, in one-letter code: UDP-3-O-acylglucosamine N-acyltransferase (336 aa).

The active-site Proton acceptor is His236.

The protein belongs to the transferase hexapeptide repeat family. LpxD subfamily. Homotrimer.

The enzyme catalyses a UDP-3-O-[(3R)-3-hydroxyacyl]-alpha-D-glucosamine + a (3R)-hydroxyacyl-[ACP] = a UDP-2-N,3-O-bis[(3R)-3-hydroxyacyl]-alpha-D-glucosamine + holo-[ACP] + H(+). The protein operates within bacterial outer membrane biogenesis; LPS lipid A biosynthesis. Functionally, catalyzes the N-acylation of UDP-3-O-acylglucosamine using 3-hydroxyacyl-ACP as the acyl donor. Is involved in the biosynthesis of lipid A, a phosphorylated glycolipid that anchors the lipopolysaccharide to the outer membrane of the cell. This chain is UDP-3-O-acylglucosamine N-acyltransferase, found in Aromatoleum aromaticum (strain DSM 19018 / LMG 30748 / EbN1) (Azoarcus sp. (strain EbN1)).